We begin with the raw amino-acid sequence, 1235 residues long: UPF0507 protein DEHA2G04334g (1235 aa).

Residues 323 to 487 (QNDDSDAIKI…LSSSMNDEPQ (165 aa)) form the VPS9 domain. The segment at 1097 to 1124 (STTEADTTDTTDATDATHASPNLANSTN) is disordered. Residues 1100 to 1115 (EADTTDTTDATDATHA) are compositionally biased toward low complexity.

Belongs to the UPF0507 family.

The protein is UPF0507 protein DEHA2G04334g of Debaryomyces hansenii (strain ATCC 36239 / CBS 767 / BCRC 21394 / JCM 1990 / NBRC 0083 / IGC 2968) (Yeast).